The following is a 795-amino-acid chain: Phenylalanine--tRNA ligase beta subunit (795 aa).

The tRNA-binding domain occupies 39 to 148 (AGAFHGVVVG…ADAPLGTDIR (110 aa)). Residues 401 to 476 (PARATIALRR…RVYGYNNIPN (76 aa)) form the B5 domain. The Mg(2+) site is built by Asp454, Asp460, Glu463, and Glu464. Residues 701–794 (SRFPANRRDI…LKQRFQASLR (94 aa)) enclose the FDX-ACB domain.

It belongs to the phenylalanyl-tRNA synthetase beta subunit family. Type 1 subfamily. Tetramer of two alpha and two beta subunits. The cofactor is Mg(2+).

Its subcellular location is the cytoplasm. The enzyme catalyses tRNA(Phe) + L-phenylalanine + ATP = L-phenylalanyl-tRNA(Phe) + AMP + diphosphate + H(+). This Dickeya dadantii (strain 3937) (Erwinia chrysanthemi (strain 3937)) protein is Phenylalanine--tRNA ligase beta subunit (pheT).